The following is a 237-amino-acid chain: MRLGKPKGGISRSASQGKTYESKRKTARQRQKWGVAIRFDSGLSRRRRNVDEKPYKCTKCSKSFSQSSTLFQHKKIHTGKKSHKCADCGKSFFQSSNLIQHRRIHTGEKPYKCDECGERFKQSSNLIQHQRIHTGEKPYCCDECGRCFSQSSHLIQHQRTHTGEKPYQCEECDKCFSQSSHLRQHMKVHKEKKSHKRGKNARAKTHPVSWKRGKGRKAVAGLRQVKGAASGLFKKKK.

The segment at 1-33 (MRLGKPKGGISRSASQGKTYESKRKTARQRQKW) is disordered. An N6-acetyllysine mark is found at K18 and K23. 5 consecutive C2H2-type zinc fingers follow at residues 55-82 (YKCT…GKKS), 83-110 (HKCA…GEKP), 111-138 (YKCD…GEKP), 139-166 (YCCD…GEKP), and 167-194 (YQCE…EKKS). Over residues 188–217 (VHKEKKSHKRGKNARAKTHPVSWKRGKGRK) the composition is skewed to basic residues. The interval 188-218 (VHKEKKSHKRGKNARAKTHPVSWKRGKGRKA) is disordered.

Belongs to the krueppel C2H2-type zinc-finger protein family. As to expression, highly expressed in the ameloblast layer of mandibular incisors, moderately expressed in submandibular gland, calvaria, kidney and lung, and expressed at low levels in brain and thymus.

Its subcellular location is the nucleus. In terms of biological role, binds DNA through the consensus sequence 5'-CAATG-3'. May be involved in transcriptional regulation and may play a role in tooth formation. The protein is Zinc finger protein 22 (Znf22) of Rattus norvegicus (Rat).